Reading from the N-terminus, the 1039-residue chain is Error-prone DNA polymerase (1039 aa).

Belongs to the DNA polymerase type-C family. DnaE2 subfamily.

The protein resides in the cytoplasm. The catalysed reaction is DNA(n) + a 2'-deoxyribonucleoside 5'-triphosphate = DNA(n+1) + diphosphate. Its function is as follows. DNA polymerase involved in damage-induced mutagenesis and translesion synthesis (TLS). It is not the major replicative DNA polymerase. This is Error-prone DNA polymerase from Idiomarina loihiensis (strain ATCC BAA-735 / DSM 15497 / L2-TR).